The chain runs to 407 residues: Argininosuccinate synthase (407 aa).

10 to 18 provides a ligand contact to ATP; that stretch reads AYSGGLDTS. L-citrulline-binding residues include Y88 and S93. G118 contributes to the ATP binding site. Positions 120, 124, and 125 each coordinate L-aspartate. N124 contributes to the L-citrulline binding site. Positions 128, 177, 186, 263, and 275 each coordinate L-citrulline.

It belongs to the argininosuccinate synthase family. Type 1 subfamily. As to quaternary structure, homotetramer.

The protein localises to the cytoplasm. It carries out the reaction L-citrulline + L-aspartate + ATP = 2-(N(omega)-L-arginino)succinate + AMP + diphosphate + H(+). It participates in amino-acid biosynthesis; L-arginine biosynthesis; L-arginine from L-ornithine and carbamoyl phosphate: step 2/3. The chain is Argininosuccinate synthase from Clostridium botulinum (strain Eklund 17B / Type B).